Here is a 142-residue protein sequence, read N- to C-terminus: Type II secretion system core protein G (142 aa).

Residues 1-8 (MRRQSQRG) constitute a propeptide, leader sequence. Phe9 carries the N-methylphenylalanine modification. A helical membrane pass occupies residues 9–29 (FTLLEIMVVIVIMGILASLVV). The segment at 122-142 (SGQDGVPGTDDDIGNWTLSKK) is disordered.

The protein belongs to the GSP G family. Type II secretion system is composed of four main components: the outer membrane complex, the inner membrane complex, the cytoplasmic secretion ATPase and the periplasm-spanning pseudopilus. Forms homomultimers. Post-translationally, cleaved by the prepilin peptidase. In terms of processing, methylated by prepilin peptidase at the amino group of the N-terminal phenylalanine once the leader sequence is cleaved.

Its subcellular location is the cell inner membrane. Core component of the type II secretion system required for the energy-dependent secretion of extracellular factors such as proteases and toxins from the periplasm. Pseudopilin (pilin-like) protein that polymerizes to form the pseudopilus. Further polymerization triggers pseudopilus growth. The polypeptide is Type II secretion system core protein G (Klebsiella michiganensis (strain ATCC 8724 / DSM 4798 / JCM 20051 / NBRC 3318 / NRRL B-199 / KCTC 1686 / BUCSAV 143 / CCM 1901)).